A 527-amino-acid chain; its full sequence is Probable bifunctional methylthioribulose-1-phosphate dehydratase/enolase-phosphatase E1 (527 aa).

The segment at Met1 to Asp244 is methylthioribulose-1-phosphate dehydratase. Cys116 provides a ligand contact to substrate. Zn(2+)-binding residues include His134 and His136. Glu159 acts as the Proton donor/acceptor; for methylthioribulose-1-phosphate dehydratase activity in catalysis. Position 209 (His209) interacts with Zn(2+). The interval Ile288 to Ile527 is enolase-phosphatase E1. Residues Asp291 and Glu293 each coordinate Mg(2+). Substrate contacts are provided by residues Ser426–Ser427 and Lys460. Asp486 serves as a coordination point for Mg(2+).

The protein in the N-terminal section; belongs to the aldolase class II family. MtnB subfamily. This sequence in the C-terminal section; belongs to the HAD-like hydrolase superfamily. MasA/MtnC family. It depends on Zn(2+) as a cofactor. Mg(2+) is required as a cofactor.

It carries out the reaction 5-(methylsulfanyl)-D-ribulose 1-phosphate = 5-methylsulfanyl-2,3-dioxopentyl phosphate + H2O. The enzyme catalyses 5-methylsulfanyl-2,3-dioxopentyl phosphate + H2O = 1,2-dihydroxy-5-(methylsulfanyl)pent-1-en-3-one + phosphate. The protein operates within amino-acid biosynthesis; L-methionine biosynthesis via salvage pathway; L-methionine from S-methyl-5-thio-alpha-D-ribose 1-phosphate: step 2/6. It participates in amino-acid biosynthesis; L-methionine biosynthesis via salvage pathway; L-methionine from S-methyl-5-thio-alpha-D-ribose 1-phosphate: step 3/6. It functions in the pathway amino-acid biosynthesis; L-methionine biosynthesis via salvage pathway; L-methionine from S-methyl-5-thio-alpha-D-ribose 1-phosphate: step 4/6. The chain is Probable bifunctional methylthioribulose-1-phosphate dehydratase/enolase-phosphatase E1 from Ricinus communis (Castor bean).